The sequence spans 278 residues: uncharacterized protein (278 aa).

This is an uncharacterized protein from Methanocaldococcus jannaschii (strain ATCC 43067 / DSM 2661 / JAL-1 / JCM 10045 / NBRC 100440) (Methanococcus jannaschii).